Consider the following 594-residue polypeptide: Probable Xaa-Pro aminopeptidase P (594 aa).

Aspartate 391, aspartate 402, glutamate 500, and glutamate 514 together coordinate Mn(2+).

The protein belongs to the peptidase M24B family. Mn(2+) serves as cofactor.

It carries out the reaction Release of any N-terminal amino acid, including proline, that is linked to proline, even from a dipeptide or tripeptide.. In terms of biological role, catalyzes the removal of a penultimate prolyl residue from the N-termini of peptides. This Pyrenophora tritici-repentis (strain Pt-1C-BFP) (Wheat tan spot fungus) protein is Probable Xaa-Pro aminopeptidase P (ampp).